Here is a 130-residue protein sequence, read N- to C-terminus: Small ribosomal subunit protein uS11c (130 aa).

This sequence belongs to the universal ribosomal protein uS11 family. Part of the 30S ribosomal subunit.

The protein localises to the plastid. The protein resides in the chloroplast. The sequence is that of Small ribosomal subunit protein uS11c from Bigelowiella natans (Pedinomonas minutissima).